The chain runs to 131 residues: Small ribosomal subunit protein uS8 (131 aa).

Belongs to the universal ribosomal protein uS8 family. Part of the 30S ribosomal subunit. Contacts proteins S5 and S12.

Functionally, one of the primary rRNA binding proteins, it binds directly to 16S rRNA central domain where it helps coordinate assembly of the platform of the 30S subunit. This is Small ribosomal subunit protein uS8 from Sulfurimonas denitrificans (strain ATCC 33889 / DSM 1251) (Thiomicrospira denitrificans (strain ATCC 33889 / DSM 1251)).